The chain runs to 110 residues: Insulin (110 aa).

Residues 1 to 24 form the signal peptide; sequence MALWMHLLTVLALLALWGPNTGQA. 3 cysteine pairs are disulfide-bonded: Cys31-Cys96, Cys43-Cys109, and Cys95-Cys100. Positions 57–87 are cleaved as a propeptide — c peptide; it reads ELEDPQVEQTELGMGLGAGGLQPLALEMALQ.

Belongs to the insulin family. Heterodimer of a B chain and an A chain linked by two disulfide bonds.

It localises to the secreted. In terms of biological role, insulin decreases blood glucose concentration. It increases cell permeability to monosaccharides, amino acids and fatty acids. It accelerates glycolysis, the pentose phosphate cycle, and glycogen synthesis in liver. The sequence is that of Insulin (INS) from Cavia porcellus (Guinea pig).